A 379-amino-acid polypeptide reads, in one-letter code: Methionine aminopeptidase 1 (379 aa).

The C6H2-type zinc finger occupies 7 to 60 (KHICCGIDCNNEADRLQCPKCLNDGVKSYFCGQECFRNSWNIHKHLHRPPNVEK). 8 residues coordinate Zn(2+): Cys10, Cys15, Cys24, Cys27, Cys37, Cys41, His49, and His53. His192 lines the a protein pocket. Residues Asp209, Asp220, and His289 each contribute to the Zn(2+) site. His296 is a binding site for a protein. Zn(2+) is bound by residues Glu322 and Glu353. At Ser373 the chain carries Phosphoserine.

The protein belongs to the peptidase M24A family. Methionine aminopeptidase type 1 subfamily. In terms of assembly, associates with the 60S ribosomal subunit of the 80S translational complex. The cofactor is Zn(2+). Co(2+) is required as a cofactor. It depends on Mn(2+) as a cofactor. Requires Fe(2+) as cofactor.

The protein resides in the cytoplasm. It localises to the nucleus. The protein localises to the nucleolus. The enzyme catalyses Release of N-terminal amino acids, preferentially methionine, from peptides and arylamides.. Cotranslationally removes the N-terminal methionine from nascent proteins. The N-terminal methionine is often cleaved when the second residue in the primary sequence is small and uncharged (Met-Ala-, Cys, Gly, Pro, Ser, Thr, or Val). This Schizosaccharomyces pombe (strain 972 / ATCC 24843) (Fission yeast) protein is Methionine aminopeptidase 1 (fma1).